Here is an 862-residue protein sequence, read N- to C-terminus: Kinesin-like protein KIN-7J (862 aa).

The 323-residue stretch at arginine 9–valine 331 folds into the Kinesin motor domain. Glycine 95–threonine 102 is an ATP binding site. Residues valine 340–aspartate 415 are a coiled coil. Basic and acidic residues-rich tracts occupy residues glutamate 475–glutamine 499 and proline 518–glutamate 531. 2 disordered regions span residues glutamate 475–serine 532 and aspartate 596–asparagine 643. A compositionally biased stretch (polar residues) spans serine 598–tyrosine 610. A compositionally biased stretch (basic and acidic residues) spans arginine 613–aspartate 629.

It belongs to the TRAFAC class myosin-kinesin ATPase superfamily. Kinesin family. KIN-7 subfamily.

This Oryza sativa subsp. japonica (Rice) protein is Kinesin-like protein KIN-7J.